Consider the following 943-residue polypeptide: Protein translocase subunit SecA (943 aa).

ATP contacts are provided by residues Gln90, 108 to 112 (GEGKT), and Asp509. The disordered stretch occupies residues 535 to 564 (PDNEHKPPIPKQRNSKSKGGFSKKASSKLK).

The protein belongs to the SecA family. In terms of assembly, monomer and homodimer. Part of the essential Sec protein translocation apparatus which comprises SecA, SecYEG and auxiliary proteins SecDF. Other proteins may also be involved.

It is found in the cell inner membrane. It localises to the cellular thylakoid membrane. Its subcellular location is the cytoplasm. The catalysed reaction is ATP + H2O + cellular proteinSide 1 = ADP + phosphate + cellular proteinSide 2.. In terms of biological role, part of the Sec protein translocase complex. Interacts with the SecYEG preprotein conducting channel. Has a central role in coupling the hydrolysis of ATP to the transfer of proteins into and across the cell membrane, serving as an ATP-driven molecular motor driving the stepwise translocation of polypeptide chains across the membrane. Functionally, probably participates in protein translocation into and across both the cytoplasmic and thylakoid membranes in cyanobacterial cells. In Prochlorococcus marinus (strain MIT 9215), this protein is Protein translocase subunit SecA.